A 437-amino-acid chain; its full sequence is GTPase Der (437 aa).

EngA-type G domains are found at residues 3–167 (ALVA…PAEN) and 177–353 (PRIA…AHRS). GTP contacts are provided by residues 9 to 16 (GRPNVGKS), 56 to 60 (DTGGW), 119 to 122 (NKVD), 183 to 190 (GRPNAGKS), 230 to 234 (DTAGI), and 295 to 298 (NKWD). The 84-residue stretch at 354–437 (TRIPTHKLNE…TPINIFIREK (84 aa)) folds into the KH-like domain.

The protein belongs to the TRAFAC class TrmE-Era-EngA-EngB-Septin-like GTPase superfamily. EngA (Der) GTPase family. In terms of assembly, associates with the 50S ribosomal subunit.

In terms of biological role, GTPase that plays an essential role in the late steps of ribosome biogenesis. This is GTPase Der from Porphyromonas gingivalis (strain ATCC BAA-308 / W83).